The chain runs to 357 residues: DNA primase small subunit PriS (357 aa).

Active-site residues include Asp-105, Asp-107, and Asp-259.

It belongs to the eukaryotic-type primase small subunit family. In terms of assembly, heterodimer of a small subunit (PriS) and a large subunit (PriL). Mg(2+) is required as a cofactor. Mn(2+) serves as cofactor.

Its function is as follows. Catalytic subunit of DNA primase, an RNA polymerase that catalyzes the synthesis of short RNA molecules used as primers for DNA polymerase during DNA replication. The small subunit contains the primase catalytic core and has DNA synthesis activity on its own. Binding to the large subunit stabilizes and modulates the activity, increasing the rate of DNA synthesis while decreasing the length of the DNA fragments, and conferring RNA synthesis capability. The DNA polymerase activity may enable DNA primase to also catalyze primer extension after primer synthesis. May also play a role in DNA repair. This is DNA primase small subunit PriS from Methanococcus maripaludis (strain C6 / ATCC BAA-1332).